The following is a 271-amino-acid chain: Orotidine 5'-phosphate decarboxylase (271 aa).

Lysine 97 acts as the Proton donor in catalysis.

Belongs to the OMP decarboxylase family. Type 2 subfamily.

It carries out the reaction orotidine 5'-phosphate + H(+) = UMP + CO2. Its pathway is pyrimidine metabolism; UMP biosynthesis via de novo pathway; UMP from orotate: step 2/2. The chain is Orotidine 5'-phosphate decarboxylase from Leptospira borgpetersenii serovar Hardjo-bovis (strain L550).